A 277-amino-acid chain; its full sequence is Alpha-ketoglutarate-dependent dioxygenase tstK (277 aa).

The protein belongs to the asaB hydroxylase/desaturase family.

The enzyme catalyses 2-[(1R,8S,14R,15R)-11-hydroxy-14,15-bis[(6E)-oct-6-en-1-yl]-3,5,9-trioxo-4,10-dioxatetracyclo[9.4.0.0(2,6).0(8,12)]pentadeca-2(6),12-dien-8-yl]acetate + 3 2-oxoglutarate + 3 O2 = phomoidride A + 3 succinate + 3 CO2 + H2O. In terms of biological role, alpha-ketoglutarate-dependent dioxygenase; part of the gene cluster that mediates the biosynthesis of the antihypercholesterolemic agents phomoidrides which are dimeric anhydrides. Within the pathway, tstK is responsible for the iterative oxidation necessary to convert prephomoidride to phomoidride A. The pathway begins with the highly reducing polyketide synthase tstiA that catalyzes the formation of a C12-fatty acyl-ACP, starting from one acetate and 5 malonate units. The hydrolase tstM is involved in the release of the C12-fatty acyl chain from phiA. The alkylcitrate synthase (ACS) tstJ and the alkylcitrate dehydratase (ACDH) tstI then give rise to decarboxylated monomeric anhydrides by coupling the C12-fatty acyl chain with oxalacetic acid. The cyclase tstC is responsible for the dimerization of the monomeric anhydrides which leads to the production of prephomoidride that contains the characteristic bicyclo[4.3.1]deca-1,6-diene system of phomoidrides. Iterative oxidation catalyzed by the alpha-ketoglutarate-dependent dioxygenase tstK produced then phomoidride A. Finally, the methyltransferase tstE converts phomoidride A to phomoidride B via an acetalization reaction. The phosphatidylethanolamine-binding protein tstB and tstN are not essential for dimerization and their functions have still to be determined. The protein is Alpha-ketoglutarate-dependent dioxygenase tstK of Talaromyces stipitatus (strain ATCC 10500 / CBS 375.48 / QM 6759 / NRRL 1006) (Penicillium stipitatum).